A 239-amino-acid polypeptide reads, in one-letter code: MNIHLDKHGQGMPLVLFHGWGFDNQIWQPIIPYLKPKYQIILVDLPGFGLTPMMDWESFKKNLLDQLPDKFALAGWSMGGLYATRLAIEEPARVQYLINITSSPRFISDIDWPGVAEEVFVNFYNNLSKDINKTLKEFISLQLNKMKFDFKIGNPPSPEGLAFGLEILGTWDFREQLKQITIPTVYLFGRLDPITPVKTMAIMEKNYPNFKYVLFNRAAHMPFLSHTDLFITMMDEFIK.

Substrate-binding positions include Trp20, 77–78 (SM), and 138–142 (FISLQ). Ser77 acts as the Nucleophile in catalysis. Catalysis depends on residues Asp192 and His220. His220 is a binding site for substrate.

This sequence belongs to the AB hydrolase superfamily. Carboxylesterase BioH family. Monomer.

It localises to the cytoplasm. It catalyses the reaction 6-carboxyhexanoyl-[ACP] methyl ester + H2O = 6-carboxyhexanoyl-[ACP] + methanol + H(+). It functions in the pathway cofactor biosynthesis; biotin biosynthesis. Its function is as follows. The physiological role of BioH is to remove the methyl group introduced by BioC when the pimeloyl moiety is complete. It allows to synthesize pimeloyl-ACP via the fatty acid synthetic pathway through the hydrolysis of the ester bonds of pimeloyl-ACP esters. The sequence is that of Pimeloyl-[acyl-carrier protein] methyl ester esterase from Legionella pneumophila (strain Paris).